Here is a 61-residue protein sequence, read N- to C-terminus: Small ribosomal subunit protein uS14 (61 aa).

Cysteine 24, cysteine 27, cysteine 40, and cysteine 43 together coordinate Zn(2+).

Belongs to the universal ribosomal protein uS14 family. Zinc-binding uS14 subfamily. In terms of assembly, part of the 30S ribosomal subunit. Contacts proteins S3 and S10. Zn(2+) serves as cofactor.

Binds 16S rRNA, required for the assembly of 30S particles and may also be responsible for determining the conformation of the 16S rRNA at the A site. The chain is Small ribosomal subunit protein uS14 from Bifidobacterium adolescentis (strain ATCC 15703 / DSM 20083 / NCTC 11814 / E194a).